We begin with the raw amino-acid sequence, 158 residues long: Cyclic pyranopterin monophosphate synthase (158 aa).

Substrate-binding positions include 76-78 and 114-115; these read LCH and ME. The active site involves D129.

This sequence belongs to the MoaC family. In terms of assembly, homohexamer; trimer of dimers.

It catalyses the reaction (8S)-3',8-cyclo-7,8-dihydroguanosine 5'-triphosphate = cyclic pyranopterin phosphate + diphosphate. It functions in the pathway cofactor biosynthesis; molybdopterin biosynthesis. Functionally, catalyzes the conversion of (8S)-3',8-cyclo-7,8-dihydroguanosine 5'-triphosphate to cyclic pyranopterin monophosphate (cPMP). This Shewanella loihica (strain ATCC BAA-1088 / PV-4) protein is Cyclic pyranopterin monophosphate synthase.